A 428-amino-acid chain; its full sequence is MANVTVIGAQWGDEGKGKLVDWLSNRADVVVRFQGGHNAGHTLVVGNQTYKLSLLPSGVVQGKLSIIGNGVVVDPWHLLKEIETLGAQGVSIGPDLLVLADNACLILPLHRDLDQAREAAATNKIGTTGRGIGPAYEDKVGRRAIRVADLHDREALEAKIDRLLAHHTPLRRGLGLPEYDGPALLAELEALAPKILPYARPAWLMLDEIVKAGSRVLFEGAQGALLDVDHGTYPYVTSSNTVAGQAAAGSGLGPKGPGYVLGIVKAYTTRVGEGPFPTELNDEVGQHLGTVGREFGTVTGRSRRCGWFDAALVRQSVALNGIAGIALTKLDVLDGLPTLKICTGYRLGDREIGYLPAGLKAQRELAPVYEEMEGWSETTQGARSWKDLPANAVKYVRRIEELIGAPVALLSTSPQRDDTILMRDPFQD.

GTP contacts are provided by residues 12 to 18 (GDEGKGK) and 40 to 42 (GHT). The active-site Proton acceptor is the aspartate 13. Mg(2+) contacts are provided by aspartate 13 and glycine 40. IMP is bound by residues 13–16 (DEGK), 38–41 (NAGH), threonine 128, arginine 142, glutamine 222, threonine 237, and arginine 301. Histidine 41 acts as the Proton donor in catalysis. 297–303 (TVTGRSR) serves as a coordination point for substrate. Residues arginine 303, 329–331 (KLD), and 411–413 (STS) contribute to the GTP site.

Belongs to the adenylosuccinate synthetase family. As to quaternary structure, homodimer. It depends on Mg(2+) as a cofactor.

Its subcellular location is the cytoplasm. It catalyses the reaction IMP + L-aspartate + GTP = N(6)-(1,2-dicarboxyethyl)-AMP + GDP + phosphate + 2 H(+). It participates in purine metabolism; AMP biosynthesis via de novo pathway; AMP from IMP: step 1/2. Its function is as follows. Plays an important role in the de novo pathway of purine nucleotide biosynthesis. Catalyzes the first committed step in the biosynthesis of AMP from IMP. This chain is Adenylosuccinate synthetase, found in Phenylobacterium zucineum (strain HLK1).